Reading from the N-terminus, the 261-residue chain is Kallikrein-1E2 (261 aa).

The N-terminal stretch at 1–17 (MWFLVLCLDLSLGETGA) is a signal peptide. The propeptide at 18 to 24 (LPPIQSR) is activation peptide. One can recognise a Peptidase S1 domain in the interval 25-258 (IIGGWECEKH…HLKWIKETIE (234 aa)). Cystine bridges form between C31–C173, C50–C66, C152–C219, C184–C198, and C209–C234. Catalysis depends on H65, which acts as the Charge relay system. Residue N79 is glycosylated (N-linked (GlcNAc...) asparagine). The Charge relay system role is filled by D120. Catalysis depends on S213, which acts as the Charge relay system.

This sequence belongs to the peptidase S1 family. Kallikrein subfamily. In terms of tissue distribution, detected in prostate and semen.

It localises to the secreted. It carries out the reaction Preferential cleavage of Arg-|-Xaa bonds in small molecule substrates. Highly selective action to release kallidin (lysyl-bradykinin) from kininogen involves hydrolysis of Met-|-Xaa or Leu-|-Xaa.. In terms of biological role, glandular kallikreins cleave Met-Lys and Arg-Ser bonds in kininogen to release Lys-bradykinin. The sequence is that of Kallikrein-1E2 (KLK1E2) from Equus caballus (Horse).